The chain runs to 586 residues: CTP synthase (586 aa).

The segment at 1–265 is amidoligase domain; it reads MVRFIFVTGG…ENKVLNFFNI (265 aa). S13 contacts CTP. UTP is bound at residue S13. Residues 14-19 and D71 contribute to the ATP site; that span reads SLGKGI. D71 and E139 together coordinate Mg(2+). CTP contacts are provided by residues 146–148, 186–191, and K222; these read DIE and KTKPTQ. Residues 186–191 and K222 each bind UTP; that span reads KTKPTQ. Residues 290–582 form the Glutamine amidotransferase type-1 domain; sequence KIAIITKYHK…IKATIEYNKS (293 aa). Residue G352 participates in L-glutamine binding. C379 serves as the catalytic Nucleophile; for glutamine hydrolysis. L-glutamine contacts are provided by residues 380–383 and E403; that span reads FGMQ. The 45-residue stretch at 429–473 folds into the RPE1 insert domain; sequence AHISKCTYSEAFECDASTVYTNIHEDSNNLSTDKLQIETNFRNMS. Residue R510 coordinates L-glutamine. Catalysis depends on residues H555 and E557.

It belongs to the CTP synthase family. As to quaternary structure, homotetramer.

It carries out the reaction UTP + L-glutamine + ATP + H2O = CTP + L-glutamate + ADP + phosphate + 2 H(+). It catalyses the reaction L-glutamine + H2O = L-glutamate + NH4(+). The catalysed reaction is UTP + NH4(+) + ATP = CTP + ADP + phosphate + 2 H(+). Its pathway is pyrimidine metabolism; CTP biosynthesis via de novo pathway; CTP from UDP: step 2/2. Allosterically activated by GTP, when glutamine is the substrate; GTP has no effect on the reaction when ammonia is the substrate. The allosteric effector GTP functions by stabilizing the protein conformation that binds the tetrahedral intermediate(s) formed during glutamine hydrolysis. Inhibited by the product CTP, via allosteric rather than competitive inhibition. Catalyzes the ATP-dependent amination of UTP to CTP with either L-glutamine or ammonia as the source of nitrogen. Regulates intracellular CTP levels through interactions with the four ribonucleotide triphosphates. The chain is CTP synthase from Rickettsia prowazekii (strain Madrid E).